A 209-amino-acid polypeptide reads, in one-letter code: Large ribosomal subunit protein uL3 (209 aa).

Position 150 is an N5-methylglutamine (Gln150).

Belongs to the universal ribosomal protein uL3 family. As to quaternary structure, part of the 50S ribosomal subunit. Forms a cluster with proteins L14 and L19. Post-translationally, methylated by PrmB.

Its function is as follows. One of the primary rRNA binding proteins, it binds directly near the 3'-end of the 23S rRNA, where it nucleates assembly of the 50S subunit. The protein is Large ribosomal subunit protein uL3 of Salmonella arizonae (strain ATCC BAA-731 / CDC346-86 / RSK2980).